A 473-amino-acid polypeptide reads, in one-letter code: Monocarboxylate transporter 4 (473 aa).

The Cytoplasmic segment spans residues methionine 1 to aspartate 17. Residues glycine 18–phenylalanine 38 traverse the membrane as a helical segment. At proline 39 to alanine 61 the chain is on the extracellular side. The helical transmembrane segment at tryptophan 62–valine 82 threads the bilayer. Topologically, residues asparagine 83 to methionine 91 are cytoplasmic. A helical membrane pass occupies residues leucine 92 to valine 112. The Extracellular portion of the chain corresponds to glutamine 113–tyrosine 115. A helical transmembrane segment spans residues leucine 116–methionine 136. Topologically, residues leucine 137–asparagine 149 are cytoplasmic. Residues glycine 150–leucine 170 traverse the membrane as a helical segment. Residues glutamine 171–glycine 179 lie on the Extracellular side of the membrane. Residues phenylalanine 180–leucine 200 traverse the membrane as a helical segment. Over glutamate 201–glycine 231 the chain is Cytoplasmic. The helical transmembrane segment at phenylalanine 232–phenylalanine 252 threads the bilayer. The Extracellular portion of the chain corresponds to valine 253 to alanine 268. Residues phenylalanine 269 to alanine 289 traverse the membrane as a helical segment. Residues glycine 290–arginine 297 are Cytoplasmic-facing. The helical transmembrane segment at cysteine 298–methionine 318 threads the bilayer. Over serine 319–aspartate 321 the chain is Extracellular. Residues tyrosine 322–leucine 342 form a helical membrane-spanning segment. Over glutamine 343–serine 358 the chain is Cytoplasmic. The helical transmembrane segment at alanine 359–glycine 379 threads the bilayer. The Extracellular portion of the chain corresponds to lysine 380–tyrosine 388. Residues methionine 389–glycine 409 traverse the membrane as a helical segment. Residues asparagine 410–valine 473 lie on the Cytoplasmic side of the membrane. Residues proline 421–aspartate 447 form a disordered region. 2 basolateral sorting signal regions span residues alanine 427–isoleucine 449 and isoleucine 449–valine 473.

It belongs to the major facilitator superfamily. Monocarboxylate porter (TC 2.A.1.13) family. Interacts with BSG; interaction mediates SLC16A3 targeting to the plasma membrane.

It is found in the cell membrane. The protein resides in the basolateral cell membrane. The catalysed reaction is (S)-lactate(in) + H(+)(in) = (S)-lactate(out) + H(+)(out). It catalyses the reaction pyruvate(out) + H(+)(out) = pyruvate(in) + H(+)(in). Functionally, proton-dependent transporter of monocarboxylates such as L-lactate and pyruvate. Plays a predominant role in the L-lactate efflux from highly glycolytic cells. The sequence is that of Monocarboxylate transporter 4 (SLC16A3) from Gallus gallus (Chicken).